Here is a 172-residue protein sequence, read N- to C-terminus: Endoribonuclease YbeY (172 aa).

His134, His138, and His144 together coordinate Zn(2+).

This sequence belongs to the endoribonuclease YbeY family. It depends on Zn(2+) as a cofactor.

It localises to the cytoplasm. Its function is as follows. Single strand-specific metallo-endoribonuclease involved in late-stage 70S ribosome quality control and in maturation of the 3' terminus of the 16S rRNA. The protein is Endoribonuclease YbeY of Burkholderia cenocepacia (strain HI2424).